Here is a 485-residue protein sequence, read N- to C-terminus: uncharacterized protein (485 aa).

Positions 1 to 23 (MRRRVCTVVRAVVCLLSTSLLTT) are cleaved as a signal peptide. Cys24 carries N-palmitoyl cysteine lipidation. Cys24 carries S-diacylglycerol cysteine lipidation. Residues 308 to 327 (SAASSPAQCPSSPSSSSSSS) are compositionally biased toward low complexity. A disordered region spans residues 308–331 (SAASSPAQCPSSPSSSSSSSTNAG).

It belongs to the TP013X lipoprotein family.

The protein resides in the cell membrane. This is an uncharacterized protein from Treponema pallidum (strain Nichols).